The sequence spans 143 residues: ATP synthase subunit b' (143 aa).

A helical transmembrane segment spans residues 6-26 (ATLPFMALQFLLLAAVLNAIF).

This sequence belongs to the ATPase B chain family. As to quaternary structure, F-type ATPases have 2 components, F(1) - the catalytic core - and F(0) - the membrane proton channel. F(1) has five subunits: alpha(3), beta(3), gamma(1), delta(1), epsilon(1). F(0) has four main subunits: a(1), b(1), b'(1) and c(10-14). The alpha and beta chains form an alternating ring which encloses part of the gamma chain. F(1) is attached to F(0) by a central stalk formed by the gamma and epsilon chains, while a peripheral stalk is formed by the delta, b and b' chains.

Its subcellular location is the cellular thylakoid membrane. F(1)F(0) ATP synthase produces ATP from ADP in the presence of a proton or sodium gradient. F-type ATPases consist of two structural domains, F(1) containing the extramembraneous catalytic core and F(0) containing the membrane proton channel, linked together by a central stalk and a peripheral stalk. During catalysis, ATP synthesis in the catalytic domain of F(1) is coupled via a rotary mechanism of the central stalk subunits to proton translocation. In terms of biological role, component of the F(0) channel, it forms part of the peripheral stalk, linking F(1) to F(0). The b'-subunit is a diverged and duplicated form of b found in plants and photosynthetic bacteria. This is ATP synthase subunit b' from Nostoc punctiforme (strain ATCC 29133 / PCC 73102).